The primary structure comprises 81 residues: U12-hexatoxin-Mg1a (81 aa).

An N-terminal signal peptide occupies residues 1-24 (MKAPATIVILIMSLISVLWATADT). Positions 25-50 (EDGNLLFPIEDFIRKFDEYPVQPKER) are excised as a propeptide. Intrachain disulfides connect Cys-52–Cys-66, Cys-59–Cys-71, and Cys-65–Cys-75. Residue Pro-78 is modified to Proline amide.

In terms of tissue distribution, expressed by the venom gland.

It localises to the secreted. Blocks voltage-gated sodium channels (Nav). Intracranial injection into mice causes lacrimation, slow breathing and death. Intrathorax injection into crickets causes death. This Macrothele gigas (Japanese funnel web spider) protein is U12-hexatoxin-Mg1a.